A 355-amino-acid chain; its full sequence is Inositol polyphosphate multikinase (355 aa).

Residue M1 is modified to N-acetylmethionine. Residue K31 participates in ATP binding. Residue S97 is modified to Phosphoserine. Residues 118–120 (ENL) and D131 contribute to the ATP site. Substrate is bound at residue 127–135 (PNILDIKLG). Positions 271 and 274 each coordinate Ca(2+). Residues 284-304 (FIDDDDDDDDNDDDDDDDAEG) are compositionally biased toward acidic residues. Residues 284–317 (FIDDDDDDDDNDDDDDDDAEGSSEGPKDKKTTGS) form a disordered region. Residue D325 participates in ATP binding. G334 is a binding site for Ca(2+).

Belongs to the inositol phosphokinase (IPK) family. Interacts with ARG80 and MCM1. Ca(2+) serves as cofactor.

The protein resides in the nucleus. The catalysed reaction is 1D-myo-inositol 1,4,5-trisphosphate + 2 ATP = 1D-myo-inositol 1,3,4,5,6-pentakisphosphate + 2 ADP + 2 H(+). The enzyme catalyses 1D-myo-inositol 1,4,5-trisphosphate + ATP = 1D-myo-inositol 1,4,5,6-tetrakisphosphate + ADP + H(+). It catalyses the reaction 1D-myo-inositol 1,4,5-trisphosphate + ATP = 1D-myo-inositol 1,3,4,5-tetrakisphosphate + ADP + H(+). It carries out the reaction 1D-myo-inositol 1,4,5,6-tetrakisphosphate + ATP = 1D-myo-inositol 1,3,4,5,6-pentakisphosphate + ADP + H(+). The catalysed reaction is a 1,2-diacyl-sn-glycero-3-phospho-(1D-myo-inositol-4,5-bisphosphate) + ATP = a 1,2-diacyl-sn-glycero-3-phospho-(1D-myo-inositol-3,4,5-trisphosphate) + ADP + H(+). Its function is as follows. Inositol phosphate kinase with both monophosphoinositol and diphosphoinositol polyphosphate synthase activities. Able to phosphorylate inositol 1,4,5-trisphosphate (Ins(1,4,5)P3) on both the carbon-3 and carbon-6 positions to synthesize inositol 1,3,4,5-tetrakisphosphate (Ins(1,3,4,5)P4) and inositol 1,4,5,6-tetrakisphosphate (Ins(1,4,5,6)P4), and then to subsequently phosphorylate and convert either isomer of InsP4 to inositol 1,3,4,5,6-pentakisphosphate (Ins(1,3,4,5,6)P5). Its predominant in vivo catalytic function is to convert Ins(1,4,5)P3 to Ins(1,4,5,6)P4 to Ins(1,3,4,5,6)P5 via 6- and 3-kinase activities. It can also use Ins(1,3,4,5,6)P5 as a substrate and act as a diphosphoinositol polyphosphate synthase to generate two different isomers of PP-InsP4. Also has a role in transcription regulation. Forms a complex with ARG80, ARG81 and MCM1 (ArgR-MCM1), which coordinates the expression of arginine anabolic and catabolic genes in response to arginine. Recruits ARG80 and MCM21 to stabilize them. Neither the kinase activity nor inositol phosphates are required for the formation of ArgR-MCM1 transcriptional complexes on DNA promoter elements and the control of arginine metabolism. In contrast, only the catalytic activity is required for PHO gene repression by phosphate and for NCR gene activation in response to nitrogen availability, indicating a role for inositol pyrophosphates in these controls. Inositol polyphosphates may be involved in the regulation of chromatin remodeling of transcription. Regulates nuclear mRNA export via inositol phosphate metabolism. Also has lipid kinase activity, transforming the lipid inositol phosphatidylinositol 4,5-bisphosphate (PI(4,5)P2) into phosphatidylinositol 3,4,5-trisphosphate (PI(3,4,5)P3) in the nucleus. Its kinase activity is necessary for the propagation of most [PSI+] prion variants. The protein is Inositol polyphosphate multikinase (ARG82) of Saccharomyces cerevisiae (strain ATCC 204508 / S288c) (Baker's yeast).